Reading from the N-terminus, the 318-residue chain is NADH-ubiquinone oxidoreductase chain 1 (318 aa).

8 helical membrane-spanning segments follow: residues 3–23 (TTNI…LTLV), 69–89 (FMFT…WIPL), 100–120 (LGIL…LWSG), 135–155 (AVAQ…SLVL), 171–191 (HMWL…STLA), 213–233 (VEYA…NIIL), 253–273 (ELHT…FLWI), and 294–314 (LPLT…FASI).

This sequence belongs to the complex I subunit 1 family.

It is found in the mitochondrion inner membrane. The catalysed reaction is a ubiquinone + NADH + 5 H(+)(in) = a ubiquinol + NAD(+) + 4 H(+)(out). Its function is as follows. Core subunit of the mitochondrial membrane respiratory chain NADH dehydrogenase (Complex I) that is believed to belong to the minimal assembly required for catalysis. Complex I functions in the transfer of electrons from NADH to the respiratory chain. The immediate electron acceptor for the enzyme is believed to be ubiquinone. The protein is NADH-ubiquinone oxidoreductase chain 1 (MT-ND1) of Choloepus didactylus (Southern two-toed sloth).